Consider the following 231-residue polypeptide: MRVLLIEDDSATAQTIELMLKSEGFNVYTTDLGEEGVDLGKIYDYDLILLDLNLPDMSGIDVLRTLRVAKINTPIMILSGSSEIDTKVKTFAGGADDYMTKPFHKDEMIARIHAVVRRSKGHAQSVIKTGDIVVNLDAKTVEVNGNRVHLTGKEYQMLELLSLRKGTTLTKEMFLNHLYGGMDEPELKIIDVFICKLRKKLAASAHGKHHIETVWGRGYVLRDPNEQVNAA.

Residues 2-116 enclose the Response regulatory domain; it reads RVLLIEDDSA…EMIARIHAVV (115 aa). At Asp51 the chain carries 4-aspartylphosphate. The segment at residues 124 to 223 is a DNA-binding region (ompR/PhoB-type); sequence QSVIKTGDIV…VWGRGYVLRD (100 aa).

Post-translationally, phosphorylated by CckA.

In terms of biological role, forms part of a two-component regulatory system CtrA/CckA that controls multiple events in the cell cycle, including cell division, stalk synthesis and cell cycle-specific transcription. Binds to a group of cell cycle-regulated promoters critical for DNA replication, DNA methylation, and class II flagellar biogenesis. This Caulobacter vibrioides (strain ATCC 19089 / CIP 103742 / CB 15) (Caulobacter crescentus) protein is Cell cycle transcriptional regulator CtrA (ctrA).